Consider the following 277-residue polypeptide: Large ribosomal subunit protein uL2 (277 aa).

Disordered stretches follow at residues 36–55 (PLPK…RHHG) and 213–277 (WKGI…RKKK).

This sequence belongs to the universal ribosomal protein uL2 family. Part of the 50S ribosomal subunit. Forms a bridge to the 30S subunit in the 70S ribosome.

Its function is as follows. One of the primary rRNA binding proteins. Required for association of the 30S and 50S subunits to form the 70S ribosome, for tRNA binding and peptide bond formation. It has been suggested to have peptidyltransferase activity; this is somewhat controversial. Makes several contacts with the 16S rRNA in the 70S ribosome. The chain is Large ribosomal subunit protein uL2 from Staphylococcus aureus (strain bovine RF122 / ET3-1).